The sequence spans 331 residues: PIN2/TERF1-interacting telomerase inhibitor 1 (331 aa).

Disordered stretches follow at residues 1–28 (MSML…DDSK), 156–175 (AQDG…LTTT), and 197–331 (SKSQ…KVSR). Residues 26-72 (DSKFGQKMLEKMGWSKGKGLGAQEQGATEHIKVKVKNNHLGLGATNN) form the G-patch domain. Ser-233 carries the phosphoserine modification. Basic residues predominate over residues 236–246 (HKAKRHKKKKR). Over residues 247–261 (VEAERGPAAKKRDQV) the composition is skewed to basic and acidic residues. Residues 254–328 (AAKKRDQVEL…DSAPVKKKKK (75 aa)) are telomerase inhibitory domain (TID). Residues Ser-269, Ser-274, and Ser-277 each carry the phosphoserine modification. Positions 291 to 301 (QDDVPKPRKRR) match the TBM motif. Residues 297–306 (PRKRRAKKTL) show a composition bias toward basic residues.

Belongs to the PINX1 family. As to quaternary structure, interacts with MCRS1, TERT, TERF1, NCL/nucleolin, and the telomerase RNA.

Its subcellular location is the nucleus. It is found in the nucleolus. It localises to the chromosome. The protein resides in the telomere. The protein localises to the centromere. Its subcellular location is the kinetochore. In terms of biological role, microtubule-binding protein essential for faithful chromosome segregation. Mediates TRF1 and TERT accumulation in nucleolus and enhances TRF1 binding to telomeres. Inhibits telomerase activity. May inhibit cell proliferation and act as tumor suppressor. In Rattus norvegicus (Rat), this protein is PIN2/TERF1-interacting telomerase inhibitor 1.